Consider the following 73-residue polypeptide: uncharacterized protein (73 aa).

Positions 48–73 (AKEPEKKTPSMEAKATSLSPNKASAS) are disordered. The segment covering 63–73 (TSLSPNKASAS) has biased composition (polar residues).

This is an uncharacterized protein from Saccharomyces cerevisiae (strain ATCC 204508 / S288c) (Baker's yeast).